A 137-amino-acid chain; its full sequence is Pro-corazonin (137 aa).

Residues 1-20 form the signal peptide; sequence MKHVFSTSLIVSLFVIFTDA. Glutamine 21 is modified (pyrrolidone carboxylic acid). Asparagine 31 bears the Asparagine amide mark. The propeptide occupies 68–137; sequence FLKSPCDVRL…RLLNDGMHRL (70 aa).

This sequence belongs to the corazonin family.

Its subcellular location is the secreted. Cardioactive peptide. Corazonin is probably involved in the physiological regulation of the heart beat. This Aedes aegypti (Yellowfever mosquito) protein is Pro-corazonin.